The following is a 270-amino-acid chain: MQGNNLQPPSPRPLECWSLHREAPQRTEASRTHPSPFLALPGSHRTANQAQVVPGLVHHPQENTQRLRIRAGLSPFPRARLAAIGSTHGHRWVPGICLPRCLCPASCALHACPPHCNNAEAHSWLRLGGPLQSRSVEHQQHACGWGWVTHATYGERGTSQAAERQRIAHTRALSVGNCPRSHFQCEFSSISKWSEGTGTFSPRPRAVKSGVGGQPSPHIRITWRSCTTLTSKPCSRAITPECVVGWSRRSRHWYSDMRTGECQGLSPITR.

The segment covering 22 to 31 (EAPQRTEASR) has biased composition (basic and acidic residues). Residues 22–42 (EAPQRTEASRTHPSPFLALPG) are disordered.

This is an uncharacterized protein from Homo sapiens (Human).